A 666-amino-acid chain; its full sequence is tRNA 5-methylaminomethyl-2-thiouridine biosynthesis bifunctional protein MnmC (666 aa).

The segment at 1 to 245 (MKQYAIQPAT…KREMLCGVME (245 aa)) is tRNA (mnm(5)s(2)U34)-methyltransferase. Positions 270–666 (IGGGIASALL…RKLLKGKAVK (397 aa)) are FAD-dependent cmnm(5)s(2)U34 oxidoreductase.

This sequence in the N-terminal section; belongs to the methyltransferase superfamily. tRNA (mnm(5)s(2)U34)-methyltransferase family. It in the C-terminal section; belongs to the DAO family. The cofactor is FAD.

It localises to the cytoplasm. It carries out the reaction 5-aminomethyl-2-thiouridine(34) in tRNA + S-adenosyl-L-methionine = 5-methylaminomethyl-2-thiouridine(34) in tRNA + S-adenosyl-L-homocysteine + H(+). Its function is as follows. Catalyzes the last two steps in the biosynthesis of 5-methylaminomethyl-2-thiouridine (mnm(5)s(2)U) at the wobble position (U34) in tRNA. Catalyzes the FAD-dependent demodification of cmnm(5)s(2)U34 to nm(5)s(2)U34, followed by the transfer of a methyl group from S-adenosyl-L-methionine to nm(5)s(2)U34, to form mnm(5)s(2)U34. The chain is tRNA 5-methylaminomethyl-2-thiouridine biosynthesis bifunctional protein MnmC from Salmonella choleraesuis (strain SC-B67).